The following is an 841-amino-acid chain: Auxin response factor 24 (841 aa).

A disordered region spans residues 109–140; that stretch reads LPEKQQDGNGSGNGNVSKDKVEEEEVVPPAAT. The TF-B3 DNA-binding region spans 148 to 250; the sequence is FCKTLTASDT…ELRVGVRRAM (103 aa). 3 disordered regions span residues 366–397, 663–715, and 804–841; these read PRPD…KRAR, QDAL…SRSC, and GALN…SENC. The span at 684–695 shows a compositional bias: basic and acidic residues; it reads AQHDSAREKHQS. Polar residues-rich tracts occupy residues 701–713 and 830–841; these read KNIQ…GSSR and GLSTPSLNSENC. In terms of domain architecture, PB1 spans 713–797; it reads RSCKKVHKQG…HKIFIYTREE (85 aa).

The protein belongs to the ARF family. As to quaternary structure, homodimers and heterodimers. Expressed in roots, culms, leaves and young panicles.

It localises to the nucleus. Functionally, auxin response factors (ARFs) are transcriptional factors that bind specifically to the DNA sequence 5'-TGTCTC-3' found in the auxin-responsive promoter elements (AuxREs). The chain is Auxin response factor 24 (ARF24) from Oryza sativa subsp. japonica (Rice).